Here is a 2050-residue protein sequence, read N- to C-terminus: Unconventional myosin-XVIIIa (2050 aa).

Basic and acidic residues-rich tracts occupy residues 1–17 (MFNLMKKDKDKDGGRKE) and 23–34 (EKKERMSAAELR). Residues 1–34 (MFNLMKKDKDKDGGRKEKKEKKEKKERMSAAELR) are disordered. Residues 1 to 398 (MFNLMKKDKD…LDVDEDDIEK (398 aa)) form a mediates nucleotide-independent binding to F-actin and interaction with GOLPH3 region. A phosphoserine mark is found at Ser35, Ser52, Ser72, and Ser74. The residue at position 79 (Thr79) is a Phosphothreonine. Phosphoserine is present on residues Ser83 and Ser98. Phosphothreonine is present on Thr99. Phosphoserine is present on residues Ser102 and Ser103. The Interaction with actin motif lies at 114 to 118 (RGSVL). Phosphoserine occurs at positions 140, 145, 157, 160, 164, 234, and 340. The segment at 140–167 (SFSQRSRDESASETSTPSEHSAAPSPQV) is disordered. The PDZ domain maps to 220–311 (ELELQRRPTG…SVRLKVQPIP (92 aa)). The 53-residue stretch at 349–401 (TEKVWLVHRDGFSLASQLKSEELSLPEGKARVKLDHDGAILDVDEDDIEKANA) folds into the Myosin N-terminal SH3-like domain. The region spanning 405 to 1181 (DRLEDLASLV…TLARLEEQRD (777 aa)) is the Myosin motor domain. An ATP-binding site is contributed by 498-505 (GSSGSGKT). Ser983, Ser1063, Ser1064, and Ser1066 each carry phosphoserine. The disordered stretch occupies residues 1051–1071 (PGEPRSASSRRVSSSSELDLP). A compositionally biased stretch (low complexity) spans 1055 to 1066 (RSASSRRVSSSS). The IQ domain occupies 1184-1213 (TSRHLTLFQAACRGYLARQHFKKRKIQDLA). A coiled-coil region spans residues 1242 to 1967 (LIQVQLSEEQ…KKNKLEGDSD (726 aa)). The disordered stretch occupies residues 1448–1477 (RNHELEKKQRRFDSELSQAHEETQREKLQR). The residue at position 1636 (Ser1636) is a Phosphoserine. Positions 1848–1897 (MEKLTEERDQRAAAENREKEQNKRLQRQLRDTKEEMSELARKEAEASRKK) are disordered. 11 positions are modified to phosphoserine: Ser1938, Ser1966, Ser1970, Ser1994, Ser1998, Ser2002, Ser2003, Ser2016, Ser2032, Ser2037, and Ser2039. A disordered region spans residues 1955–2050 (YQKKKNKLEG…TEAKLTETSA (96 aa)). The residue at position 2041 (Thr2041) is a Phosphothreonine. A compositionally biased stretch (basic and acidic residues) spans 2041–2050 (TEAKLTETSA).

The protein belongs to the TRAFAC class myosin-kinesin ATPase superfamily. Myosin family. As to quaternary structure, homodimer. Forms a tripartite complex with CDC42BPA/CDC42BPB and LURAP1 with the latter acting as an adapter connecting CDC42BPA/CDC42BPB and MYO18A. Binds F-actin; regulated by ADP and GOLPH3. Interacts with GOLPH3; the interaction is direct and may link Golgi membranes to the actin cytoskeleton. Interacts with JAK3. Interacts with MSR1 and CD14. In terms of processing, phosphorylated on tyrosine upon CSF1R activation. Isoform 6 is phosphorylated on Ser-340. Isoform 1; Expressed ubiquitously. Isoform 2: Specifically expressed in most hematopoietic cells. Isoform 3: Predominantly expressed in alveolar macrophages.

Its subcellular location is the golgi apparatus. The protein localises to the trans-Golgi network. It is found in the golgi outpost. It localises to the cytoplasm. The protein resides in the cytoskeleton. Its subcellular location is the microtubule organizing center. The protein localises to the endoplasmic reticulum-Golgi intermediate compartment. In terms of biological role, may link Golgi membranes to the cytoskeleton and participate in the tensile force required for vesicle budding from the Golgi. Thereby, may play a role in Golgi membrane trafficking and could indirectly give its flattened shape to the Golgi apparatus. Alternatively, in concert with LURAP1 and CDC42BPA/CDC42BPB, has been involved in modulating lamellar actomyosin retrograde flow that is crucial to cell protrusion and migration. May be involved in the maintenance of the stromal cell architectures required for cell to cell contact. Regulates trafficking, expression, and activation of innate immune receptors on macrophages. Plays a role to suppress inflammatory responsiveness of macrophages via a mechanism that modulates CD14 trafficking. Acts as a receptor of surfactant-associated protein A (SFTPA1/SP-A) and plays an important role in internalization and clearance of SFTPA1-opsonized S.aureus by alveolar macrophages. Strongly enhances natural killer cell cytotoxicity. This chain is Unconventional myosin-XVIIIa (Myo18a), found in Mus musculus (Mouse).